A 159-amino-acid polypeptide reads, in one-letter code: Protein C2 (159 aa).

The Nuclear localization signal motif lies at 43–60 (KKRPPKLTWAPKKKRRKA). A zinc finger lies at 65-81 (CGCSYYGGIDCEDGFTH). Residues 102-139 (PNLLPPPEHNNNGDGEQNNNITNQSQPQPAESVGSPDL) form a disordered region. Residues 110–124 (HNNNGDGEQNNNITN) are compositionally biased toward low complexity.

It belongs to the geminiviridae transcriptional activator protein family. As to quaternary structure, monomer. Suppress local silencing by interacting with and inactivating host adenosine kinase 2 (ADK2) in the cytoplasm. Interacts with and inhibits host SNF1 kinase.

Its subcellular location is the host cytoplasm. Functionally, acts as a suppressor of RNA-mediated gene silencing, also known as post-transcriptional gene silencing (PTGS), a mechanism of plant viral defense that limits the accumulation of viral RNAs. Suppresses the host RNA silencing by inhibiting adenosine kinase 2 (ADK2), a kinase involved in a general methylation pathway. Also suppresses the host basal defense by interacting with and inhibiting SNF1 kinase, a key regulator of cell metabolism implicated in innate antiviral defense. Determines pathogenicity. The sequence is that of Protein C2 from Tomato pseudo-curly top virus (TPCTV).